Here is a 672-residue protein sequence, read N- to C-terminus: DNA mismatch repair protein MutL (672 aa).

The span at 443–454 shows a compositional bias: polar residues; sequence SYTSDSNQYENS. The tract at residues 443-469 is disordered; it reads SYTSDSNQYENSCKSDVDKESKSKTTG. Over residues 455-465 the composition is skewed to basic and acidic residues; it reads CKSDVDKESKS.

Belongs to the DNA mismatch repair MutL/HexB family.

In terms of biological role, this protein is involved in the repair of mismatches in DNA. It is required for dam-dependent methyl-directed DNA mismatch repair. May act as a 'molecular matchmaker', a protein that promotes the formation of a stable complex between two or more DNA-binding proteins in an ATP-dependent manner without itself being part of a final effector complex. The chain is DNA mismatch repair protein MutL from Clostridium botulinum (strain Eklund 17B / Type B).